Consider the following 465-residue polypeptide: GTPase Der (465 aa).

EngA-type G domains are found at residues 3 to 167 and 179 to 352; these read PLVA…PEEG and IRIA…ESAN. GTP contacts are provided by residues 9 to 16, 57 to 61, 119 to 122, 185 to 192, 232 to 236, and 297 to 300; these read GRPNVGKS, DTGGI, NKID, DTAGL, and NKWD. Positions 353 to 437 constitute a KH-like domain; the sequence is KTFTTSEVNK…PVSFIFREGT (85 aa).

It belongs to the TRAFAC class TrmE-Era-EngA-EngB-Septin-like GTPase superfamily. EngA (Der) GTPase family. Associates with the 50S ribosomal subunit.

Functionally, GTPase that plays an essential role in the late steps of ribosome biogenesis. This chain is GTPase Der, found in Stenotrophomonas maltophilia (strain R551-3).